Here is a 1031-residue protein sequence, read N- to C-terminus: Probable ATP-dependent RNA helicase DDX46 (1031 aa).

Residues 1-24 show a composition bias toward basic residues; the sequence is MGRESRHYRKRSASRGRSGSRSRS. Residues 1–228 form a disordered region; that stretch reads MGRESRHYRK…EMEGEELDPL (228 aa). Glycine 2 carries the N-myristoyl glycine lipid modification. The segment covering 26 to 49 has biased composition (basic and acidic residues); the sequence is SPSDKRSKRGDDRRSRSRDRDRRR. Composition is skewed to basic residues over residues 50-73 and 81-103; these read ERSR…RSRS and ERRR…RRSR. Residues 112–200 are compositionally biased toward basic and acidic residues; it reads KKTENRSRSK…EMKQGKKWSL (89 aa). A coiled-coil region spans residues 152–197; that stretch reads DQNKLEEEMRKRKERVEKWREEQRKKAMENIGELKKEIEEMKQGKK. Lysine 186 is covalently cross-linked (Glycyl lysine isopeptide (Lys-Gly) (interchain with G-Cter in SUMO2)). Serine 199 is modified (phosphoserine). Acidic residues-rich tracts occupy residues 201 to 211 and 219 to 228; these read EDDDDDEDDPA and EMEGEELDPL. Position 263 is an N6-acetyllysine (lysine 263). Position 294 is a phosphotyrosine (tyrosine 294). Phosphoserine occurs at positions 295 and 296. Residue lysine 325 forms a Glycyl lysine isopeptide (Lys-Gly) (interchain with G-Cter in SUMO2) linkage. A Phosphoserine modification is found at serine 346. The short motif at 372–400 is the Q motif element; it reads KSWVQCGISMKILNSLKKHGYEKPTPIQT. The 179-residue stretch at 403–581 folds into the Helicase ATP-binding domain; that stretch reads IPAIMSGRDL…RRILSKPIEV (179 aa). 416–423 is an ATP binding site; that stretch reads AKTGSGKT. A DEAD box motif is present at residues 529-532; sequence DEAD. The Helicase C-terminal domain occupies 592–753; that stretch reads DVEQQVIVIE…AVPPDLEKLW (162 aa). Position 776 is an N6-acetyllysine (lysine 776). Residue lysine 779 forms a Glycyl lysine isopeptide (Lys-Gly) (interchain with G-Cter in SUMO2) linkage. Serine 804 bears the Phosphoserine mark. Lysine 903 carries the N6-acetyllysine modification. Residues lysine 907 and lysine 915 each participate in a glycyl lysine isopeptide (Lys-Gly) (interchain with G-Cter in SUMO2) cross-link. Phosphoserine is present on serine 928.

Belongs to the DEAD box helicase family. DDX46/PRP5 subfamily. In terms of assembly, component of the 17S U2 SnRNP complex, a ribonucleoprotein complex that contains small nuclear RNA (snRNA) U2 and a number of specific proteins. Within the 17S U2 SnRNP complex, DDX46 is part of the SF3B subcomplex, which is required for 'A' complex assembly formed by the stable binding of U2 snRNP to the branchpoint sequence in pre-mRNA. Recruited to the 17S U2 SnRNP complex following release of DDX42; DDX42 and DDX46 bind the SF3B subcomplex in a competitive manner.

The protein localises to the nucleus speckle. The protein resides in the nucleus. It is found in the cajal body. It carries out the reaction ATP + H2O = ADP + phosphate + H(+). Its function is as follows. Component of the 17S U2 SnRNP complex of the spliceosome, a large ribonucleoprotein complex that removes introns from transcribed pre-mRNAs. The 17S U2 SnRNP complex (1) directly participates in early spliceosome assembly and (2) mediates recognition of the intron branch site during pre-mRNA splicing by promoting the selection of the pre-mRNA branch-site adenosine, the nucleophile for the first step of splicing. Within the 17S U2 SnRNP complex, DDX46 plays essential roles during assembly of pre-spliceosome and proofreading of the branch site. The polypeptide is Probable ATP-dependent RNA helicase DDX46 (Homo sapiens (Human)).